The primary structure comprises 84 residues: Small ribosomal subunit protein uS17 (84 aa).

The protein belongs to the universal ribosomal protein uS17 family. As to quaternary structure, part of the 30S ribosomal subunit.

One of the primary rRNA binding proteins, it binds specifically to the 5'-end of 16S ribosomal RNA. The protein is Small ribosomal subunit protein uS17 of Clostridium botulinum (strain ATCC 19397 / Type A).